A 150-amino-acid polypeptide reads, in one-letter code: Putative esterase SSO1253 (150 aa).

The protein belongs to the thioesterase PaaI family.

The protein is Putative esterase SSO1253 of Saccharolobus solfataricus (strain ATCC 35092 / DSM 1617 / JCM 11322 / P2) (Sulfolobus solfataricus).